Here is a 216-residue protein sequence, read N- to C-terminus: NADH-quinone oxidoreductase subunit C (216 aa).

It belongs to the complex I 30 kDa subunit family. As to quaternary structure, NDH-1 is composed of 14 different subunits. Subunits NuoB, C, D, E, F, and G constitute the peripheral sector of the complex.

Its subcellular location is the cell inner membrane. It catalyses the reaction a quinone + NADH + 5 H(+)(in) = a quinol + NAD(+) + 4 H(+)(out). Functionally, NDH-1 shuttles electrons from NADH, via FMN and iron-sulfur (Fe-S) centers, to quinones in the respiratory chain. The immediate electron acceptor for the enzyme in this species is believed to be ubiquinone. Couples the redox reaction to proton translocation (for every two electrons transferred, four hydrogen ions are translocated across the cytoplasmic membrane), and thus conserves the redox energy in a proton gradient. The chain is NADH-quinone oxidoreductase subunit C from Francisella tularensis subsp. tularensis (strain FSC 198).